The following is a 244-amino-acid chain: METFPHVFQYPFAVLQQQESGFPLRGRWHTDFFHNDHPIVLELGCGRGEYTVGLGKRFPEKNFIGIDIKGARMWAGAKESLQEGMSNVAFLRTDIELLDRFFAEGEVAEIWITFPDPQMKKVGKRLTGTRFLSLYDKVLERGGRIHLKTDSPFLYTYTKALVELNGLPVHEITDDLYGKGCVENEILGIRTYYEQQWLERGLTIKYISFGLGEPDCEYREPDIEIEPDSYRSYNRSRRSQAVPS.

Positions 42, 67, 94, and 116 each coordinate S-adenosyl-L-methionine. Aspartate 116 is an active-site residue. Residues lysine 120, aspartate 150, and 191-194 (TYYE) contribute to the substrate site.

Belongs to the class I-like SAM-binding methyltransferase superfamily. TrmB family.

The enzyme catalyses guanosine(46) in tRNA + S-adenosyl-L-methionine = N(7)-methylguanosine(46) in tRNA + S-adenosyl-L-homocysteine. It participates in tRNA modification; N(7)-methylguanine-tRNA biosynthesis. Functionally, catalyzes the formation of N(7)-methylguanine at position 46 (m7G46) in tRNA. The protein is tRNA (guanine-N(7)-)-methyltransferase of Porphyromonas gingivalis (strain ATCC BAA-308 / W83).